Consider the following 158-residue polypeptide: MKDDFVIYNETDFYIKPYQDDFNAIFQKIKTLLAITEPLELSLIIVDAQEQLELNQKYRHKDYVADVITFALEEENKIDLFELTGLRSLGDIFICYEKALAQAAEYNHSPRREFAFLFTHGMLHILGYDHQTPADEEKMFNLQRKVLNDLQINRIPIK.

Zn(2+) contacts are provided by His-120, His-124, and His-130.

It belongs to the endoribonuclease YbeY family. Zn(2+) serves as cofactor.

It is found in the cytoplasm. In terms of biological role, single strand-specific metallo-endoribonuclease involved in late-stage 70S ribosome quality control and in maturation of the 3' terminus of the 16S rRNA. This is Endoribonuclease YbeY from Spiroplasma citri.